We begin with the raw amino-acid sequence, 366 residues long: Photosynthetic reaction center cytochrome c subunit (366 aa).

The first 22 residues, 1 to 22, serve as a signal peptide directing secretion; sequence MALAVRISTLTVAVTAAALLAG. Residue cysteine 23 is the site of N-palmitoyl cysteine attachment. A lipid anchor (S-diacylglycerol cysteine) is attached at cysteine 23. Residues methionine 94, cysteine 107, cysteine 110, histidine 111, methionine 129, histidine 143, cysteine 151, cysteine 154, histidine 155, methionine 238, cysteine 249, cysteine 252, histidine 253, cysteine 309, cysteine 312, and histidine 313 each coordinate heme.

Component of the photosynthetic reaction center composed of protein subunits L (PufL), M (PufM), H (PuhA) and cytochrome C (PufC). The reaction center interacts with light-harvesting antenna complex LH1. Post-translationally, binds 4 heme groups per subunit.

Its subcellular location is the cellular chromatophore membrane. Its function is as follows. The reaction center of purple bacteria contains a tightly bound cytochrome molecule which re-reduces the photo oxidized primary electron donor. This chain is Photosynthetic reaction center cytochrome c subunit (pufC), found in Rubrivivax gelatinosus (strain NBRC 100245 / IL144).